The primary structure comprises 61 residues: Large ribosomal subunit protein eL20 (61 aa).

Belongs to the eukaryotic ribosomal protein eL20 family. As to quaternary structure, part of the 50S ribosomal subunit. Binds 23S rRNA.

The protein is Large ribosomal subunit protein eL20 of Methanosarcina mazei (strain ATCC BAA-159 / DSM 3647 / Goe1 / Go1 / JCM 11833 / OCM 88) (Methanosarcina frisia).